The following is a 286-amino-acid chain: Putative S-adenosyl-L-methionine-dependent methyltransferase FRAAL3718 (286 aa).

S-adenosyl-L-methionine-binding positions include aspartate 122 and 151–152 (DL).

Belongs to the UPF0677 family.

In terms of biological role, exhibits S-adenosyl-L-methionine-dependent methyltransferase activity. This is Putative S-adenosyl-L-methionine-dependent methyltransferase FRAAL3718 from Frankia alni (strain DSM 45986 / CECT 9034 / ACN14a).